The following is a 351-amino-acid chain: Probable NADP-dependent isopropanol dehydrogenase (351 aa).

The Zn(2+) site is built by cysteine 37, histidine 59, glutamate 60, and aspartate 150. NADP(+) contacts are provided by residues 175–178, 198–200, 265–267, and lysine 340; these read AGPV, DSR, and VNY.

The protein belongs to the zinc-containing alcohol dehydrogenase family. Zn(2+) serves as cofactor.

The enzyme catalyses propan-2-ol + NADP(+) = acetone + NADPH + H(+). Functionally, alcohol dehydrogenase with a preference for medium chain secondary alcohols, such as 2-butanol and isopropanol. Has very low activity with primary alcohols, such as ethanol. Under physiological conditions, the enzyme reduces aldehydes and 2-ketones to produce secondary alcohols. Is also active with acetaldehyde and propionaldehyde. The chain is Probable NADP-dependent isopropanol dehydrogenase (adh) from Mycoplasma pneumoniae (strain ATCC 29342 / M129 / Subtype 1) (Mycoplasmoides pneumoniae).